The sequence spans 294 residues: Metallophosphoesterase MPPED2 (294 aa).

D65, H67, D86, N117, and H213 together coordinate Mn(2+). GMP is bound at residue N117–H118. GMP-binding positions include K225 to E226 and H254 to E255. A Mn(2+)-binding site is contributed by H254.

Belongs to the UPF0046 family. As to quaternary structure, homodimer. Mn(2+) is required as a cofactor. It depends on Co(2+) as a cofactor. Expressed in fetal brain (at protein level). detected in fetal and adult brain.

Inhibited by nmolar levels of AMP and GMP. Its function is as follows. Displays low metallophosphoesterase activity (in vitro). May play a role in the development of the nervous system. The protein is Metallophosphoesterase MPPED2 (Mpped2) of Rattus norvegicus (Rat).